We begin with the raw amino-acid sequence, 244 residues long: Phosphoadenosine 5'-phosphosulfate reductase (244 aa).

C239 (nucleophile; cysteine thiosulfonate intermediate) is an active-site residue.

Belongs to the PAPS reductase family. CysH subfamily.

It localises to the cytoplasm. It catalyses the reaction [thioredoxin]-disulfide + sulfite + adenosine 3',5'-bisphosphate + 2 H(+) = [thioredoxin]-dithiol + 3'-phosphoadenylyl sulfate. Its pathway is sulfur metabolism; hydrogen sulfide biosynthesis; sulfite from sulfate: step 3/3. Catalyzes the formation of sulfite from phosphoadenosine 5'-phosphosulfate (PAPS) using thioredoxin as an electron donor. The chain is Phosphoadenosine 5'-phosphosulfate reductase from Klebsiella pneumoniae (strain 342).